The chain runs to 515 residues: Maturase K (515 aa).

The protein belongs to the intron maturase 2 family. MatK subfamily.

The protein resides in the plastid. It is found in the chloroplast. In terms of biological role, usually encoded in the trnK tRNA gene intron. Probably assists in splicing its own and other chloroplast group II introns. This Pinus attenuata (Knobcone pine) protein is Maturase K.